The following is a 118-amino-acid chain: Eukaryotic translation initiation factor 4E-binding protein 1 (118 aa).

2 stretches are compositionally biased toward polar residues: residues 1 to 12 (MSGGSSCSQTPS) and 34 to 48 (YSTT…TTPG). 2 disordered regions span residues 1-20 (MSGG…ATRR) and 25-48 (DGVQ…TTPG). Ser-2 is subject to N-acetylserine. Thr-37 carries the post-translational modification Phosphothreonine; by MTOR. Thr-41 carries the post-translational modification Phosphothreonine. Residue Ser-44 is modified to Phosphoserine. Phosphothreonine; by MTOR is present on Thr-46. Thr-50 carries the post-translational modification Phosphothreonine. Residue Tyr-54 is modified to Phosphotyrosine. Positions 54-60 (YDRKFLM) match the YXXXXLphi motif motif. Lys-57 participates in a covalent cross-link: Glycyl lysine isopeptide (Lys-Gly) (interchain with G-Cter in ubiquitin). Positions 64 to 118 (NSPVTKTPPRDLPTIPGVTSPSSDEPPMEASQSHLRNSPEDKRAGGEESQFEMDI) are disordered. Ser-65 carries the post-translational modification Phosphoserine; by DYRK2, MAPK1, MAPK3 and MTOR. Thr-70 is subject to Phosphothreonine; by MTOR. Thr-77 carries the post-translational modification Phosphothreonine. Phosphoserine is present on residues Ser-83 and Ser-96. Residues 100–109 (NSPEDKRAGG) are compositionally biased toward basic and acidic residues. Ser-101 carries the post-translational modification Phosphoserine; by DYRK2. Ser-112 is subject to Phosphoserine. Positions 114–118 (FEMDI) match the TOS motif motif.

Belongs to the eIF4E-binding protein family. In terms of assembly, hypophosphorylated EIF4EBP1 competes with EIF4G1/EIF4G3 to interact with EIF4E; insulin stimulated MAP-kinase (MAPK1 and MAPK3) or mTORC1 phosphorylation of EIF4EBP1 causes dissociation of the complex allowing EIF4G1/EIF4G3 to bind and consequent initiation of translation. Interacts (via TOS motif) with RPTOR; promoting phosphorylation by mTORC1. In terms of processing, phosphorylated on serine and threonine residues in response to insulin, EGF and PDGF. Phosphorylation at Thr-37, Thr-46, Ser-65 and Thr-70, corresponding to the hyperphosphorylated form, is regulated by mTORC1 and abolishes binding to EIF4E. Post-translationally, ubiquitinated: when eIF4E levels are low, hypophosphorylated form is ubiquitinated by the BCR(KLHL25) complex, leading to its degradation and serving as a homeostatic mechanism to maintain translation and prevent eIF4E inhibition when eIF4E levels are low. Not ubiquitinated when hyperphosphorylated (at Thr-37, Thr-46, Ser-65 and Thr-70) or associated with eIF4E.

It is found in the cytoplasm. It localises to the nucleus. Repressor of translation initiation that regulates EIF4E activity by preventing its assembly into the eIF4F complex: hypophosphorylated form competes with EIF4G1/EIF4G3 and strongly binds to EIF4E, leading to repress translation. In contrast, hyperphosphorylated form dissociates from EIF4E, allowing interaction between EIF4G1/EIF4G3 and EIF4E, leading to initiation of translation. Mediates the regulation of protein translation by hormones, growth factors and other stimuli that signal through the MAP kinase and mTORC1 pathways. The chain is Eukaryotic translation initiation factor 4E-binding protein 1 (EIF4EBP1) from Homo sapiens (Human).